Reading from the N-terminus, the 104-residue chain is Nucleoid-associated protein jk2011 (104 aa).

The protein belongs to the YbaB/EbfC family. As to quaternary structure, homodimer.

Its subcellular location is the cytoplasm. It localises to the nucleoid. Its function is as follows. Binds to DNA and alters its conformation. May be involved in regulation of gene expression, nucleoid organization and DNA protection. This chain is Nucleoid-associated protein jk2011, found in Corynebacterium jeikeium (strain K411).